A 303-amino-acid polypeptide reads, in one-letter code: MDDEEGNATLIDEISVLEARRDVLLDELKSLDNATLSDLVQKPELSKNLSVNNEFLKETPLNQPALHYDRLSGISFFQPNDPEELSRKTLLVKNKKTGAIETAPSIPLLGVRFDIMLNPVNIGFTNLSENPISSASGMDEELEGGNRFDVPYYIIFRVFHDSFALYKYTIPSFLNIQEWADEYLTGKNPERFRIFLWKVDKLLTAYICRKNALLQINKSLTIDGTNISANLSCTHLVIQIPKVIQATLVCSSESTRVVKSRIYQYSDENWKRDHRLELSLLDNKRWVNILVSHLTAPESHASL.

This sequence belongs to the CENP-O/MCM21 family. As to quaternary structure, component of the heterotetrameric kinetochore subcomplex COMA, which consists of fta2, fta7, mal2 and mis17. The COMA subcomplex is part of a larger constitutive centromere-associated network (CCAN) (also known as central kinetochore Sim4 complex in fission yeast), which is composed of at least cnl2, cnp3, cnp20, fta1, fta2, fta3, fta4, fta6, fta7, mal2, mhf1, mhf2, mis6, mis15, mis17, sim4 and wip1.

Its subcellular location is the nucleus. It localises to the chromosome. The protein localises to the centromere. The protein resides in the kinetochore. Its function is as follows. Component of the kinetochore, a multiprotein complex that assembles on centromeric DNA and attaches chromosomes to spindle microtubules, mediating chromosome segregation and sister chromatid segregation during meiosis and mitosis. Component of the inner kinetochore COMA complex, which connects centromere-associated proteins and the outer kinetochore. COMA interacts with other inner kinetochore proteins to form the inner kinetochore constitutive centromere-associated network (CCAN), which serves as a structural platform for outer kinetochore assembly. This is Inner kinetochore subunit mal2 (mal2) from Schizosaccharomyces pombe (strain 972 / ATCC 24843) (Fission yeast).